A 632-amino-acid polypeptide reads, in one-letter code: Chaperone protein HtpG (632 aa).

The segment at 1–339 (MTQQTMSFQA…SSDLPLNVSR (339 aa)) is a; substrate-binding. The segment at 340–559 (EILQESRDVK…DNDMSGYLQR (220 aa)) is b. Residues 560–632 (MLKAAGQSAP…TNALLLSRAA (73 aa)) are c.

The protein belongs to the heat shock protein 90 family. As to quaternary structure, homodimer.

It is found in the cytoplasm. Its function is as follows. Molecular chaperone. Has ATPase activity. This Burkholderia mallei (strain NCTC 10247) protein is Chaperone protein HtpG.